A 266-amino-acid chain; its full sequence is Early E1A protein (266 aa).

The tract at residues 39–47 (MSLHEMYDL) is interaction with RB1 in competition with E2F1. Positions 94-98 (PELQP) match the PXLXP motif, interaction with host ZMYND11 motif. The LXCXE motif, interaction with host RB1 motif lies at 103–107 (LFCYE). A zinc finger lies at 160–180 (CSSCDYHRKTSGCPEILCSLC). A disordered region spans residues 193 to 244 (VSDSEPDEPDSTTADSNHGSPPTLRCTPPRDLPRPVPVKASPGKRPAVNSLH). Over residues 203-212 (STTADSNHGS) the composition is skewed to polar residues. The short motif at 255-259 (PLDLS) is the PXDLS motif, CTBP-binding element. The Nuclear localization signal signature appears at 261-265 (KRSRS).

Belongs to the adenoviridae E1A protein family. As to quaternary structure, interacts with host UBE2I; this interaction interferes with polySUMOylation. Interacts with host RB1; this interaction induces the aberrant dissociation of RB1-E2F1 complex thereby disrupting the activity of RB1 and activating E2F1-regulated genes. Interacts with host ATF7; the interaction enhances ATF7-mediated viral transactivation activity which requires the zinc binding domains of both proteins. Isoform early E1A 32 kDa protein and isoform early E1A 26 kDa protein interact (via N-terminus) with CUL1 and E3 ubiquitin ligase RBX1; these interactions inhibit RBX1-CUL1-dependent elongation reaction of ubiquitin chains and attenuate ubiquitination of SCF(FBXW7) target proteins. Interacts (via PXLXP motif) with host ZMYND11/BS69 (via MYND-type zinc finger); this interaction inhibits E1A mediated transactivation. Interacts with host EP300; this interaction stimulates the acetylation of RB1 by recruiting EP300 and RB1 into a multimeric-protein complex. Interacts with host CTBP1 and CTBP2; this interaction seems to potentiate viral replication. Interacts with host DCAF7. Interacts with host DYRK1A. Interacts with host KPNA4; this interaction allows E1A import into the host nucleus. Interacts with host EP400; this interaction stabilizes MYC. Interacts with host TBP protein; this interaction probably disrupts the TBP-TATA complex.

It localises to the host nucleus. Functionally, plays a role in viral genome replication by driving entry of quiescent cells into the cell cycle. Stimulation of progression from G1 to S phase allows the virus to efficiently use the cellular DNA replicating machinery to achieve viral genome replication. E1A protein has both transforming and trans-activating activities. Induces the disassembly of the E2F1 transcription factor from RB1 by direct competition for the same binding site on RB1, with subsequent transcriptional activation of E2F1-regulated S-phase genes and of the E2 region of the adenoviral genome. Release of E2F1 leads to the ARF-mediated inhibition of MDM2 and causes TP53/p53 to accumulate because it is not targeted for degradation by MDM2-mediated ubiquitination anymore. This increase in TP53, in turn, would arrest the cell proliferation and direct its death but this effect is counteracted by the viral protein E1B-55K. Inactivation of the ability of RB1 to arrest the cell cycle is critical for cellular transformation, uncontrolled cellular growth and proliferation induced by viral infection. Interaction with RBX1 and CUL1 inhibits ubiquitination of the proteins targeted by SCF(FBXW7) ubiquitin ligase complex, and may be linked to unregulated host cell proliferation. The tumorigenesis-restraining activity of E1A may be related to the disruption of the host CtBP-CtIP complex through the CtBP binding motif. The sequence is that of Early E1A protein from Simian adenovirus serotype 7 (SAdV-7).